A 47-amino-acid polypeptide reads, in one-letter code: PhoP/PhoQ regulator MgrB (47 aa).

Residues 6–26 (WVVLGIVVVVCLLLWAQVFNI) traverse the membrane as a helical segment.

The protein belongs to the MgrB family. May form homooligomers. Probably interacts with the periplasmic domain of PhoQ.

It is found in the cell inner membrane. In terms of biological role, phoP-regulated transcription is redox-sensitive, being activated when the periplasm becomes more reducing. MgrB acts between DsbA/DsbB and PhoP/PhoQ in this pathway. Represses PhoP/PhoQ signaling, possibly by binding to the periplasmic domain of PhoQ, altering its activity and that of downstream effector PhoP. In Salmonella agona (strain SL483), this protein is PhoP/PhoQ regulator MgrB.